Consider the following 600-residue polypeptide: Adenine deaminase 2 (600 aa).

Belongs to the metallo-dependent hydrolases superfamily. Adenine deaminase family. Mn(2+) is required as a cofactor.

It carries out the reaction adenine + H2O + H(+) = hypoxanthine + NH4(+). The chain is Adenine deaminase 2 from Bradyrhizobium sp. (strain ORS 278).